Consider the following 291-residue polypeptide: Glycine--tRNA ligase alpha subunit (291 aa).

Belongs to the class-II aminoacyl-tRNA synthetase family. In terms of assembly, tetramer of two alpha and two beta subunits.

It is found in the cytoplasm. It catalyses the reaction tRNA(Gly) + glycine + ATP = glycyl-tRNA(Gly) + AMP + diphosphate. The polypeptide is Glycine--tRNA ligase alpha subunit (Coprothermobacter proteolyticus (strain ATCC 35245 / DSM 5265 / OCM 4 / BT)).